Here is a 1056-residue protein sequence, read N- to C-terminus: Pleckstrin homology domain-containing family M member 1 (1056 aa).

An RUN domain is found at 41-183; the sequence is TSEDGDANTM…LSFELSYKSA (143 aa). 3 disordered regions span residues 215–245, 277–303, and 360–422; these read QRKE…RRNQ, GSKS…EDSD, and PAQA…QAHD. Phosphoserine is present on Ser219. A compositionally biased stretch (polar residues) spans 389–404; it reads PVESTSGQQPSSTVSE. Ser432 and Ser435 each carry phosphoserine. The disordered stretch occupies residues 451–483; the sequence is SREQPLESASDHPIASYRGTPGSRPGLHRHFSQ. Residue Ser490 is modified to Phosphoserine. A PH 1 domain is found at 534-625; sequence GLMKLGTVER…WLDRVREALQ (92 aa). The short motif at 632 to 638 is the LIR element; that stretch reads EDEWVNV. Positions 654–1056 are interaction with RAB7A; it reads CLSPSDLLSE…RKYQEQNIFA (403 aa). Positions 683–777 constitute a PH 2 domain; the sequence is DAIKESLLYL…WRDLVRKVLA (95 aa). A Phorbol-ester/DAG-type zinc finger spans residues 986–1040; that stretch reads QHVYHCDLCTQRGFICQICQHHDIIFPFEFDTTVRCAECKTVFHQSCQAVVKKGC.

Interacts (via N- and C-terminus) with RAB7A (GTP-bound form). Simultaneously interacts with RAB7A and ARL8B; bringing about clustering and fusion of late endosomes and lysosomes. Interacts (via RUN domain) with ARL8B (GTP-bound form); the interaction is required for PLEKHM1 localization to lysosomes and for ARL8B function in delivery and degradation of endocytic and autophagic cargo in lysosomes. PLEKHM1 and PLEKHM2 compete for interaction with ARL8B. Interacts with ARL8A; the interaction is weaker than with ARL8B. Interacts with VPS41, VPS11, VPS18, VPS33A and VPS39; indicative for an association with the HOPS complex; the interactions with, at least, VPS41, VPS11, VPS18 and VPS33A require ARL8B. Interacts with GABARAP, GABARAPL, GABARAPL2, MAP1LC3A, MAP1LC3B and MAP1LC3C. Interacts with PAFAH1B. Interacts (via N- and C-terminus) with NDEL1. Interacts (via C-terminus) with MAP3K7. Interacts (via N- and C-terminus) with FAM98A. Interacts (via C-terminus) with DEF8; this interaction is weak but increased in a RAB7A-dependent manner. In colon carcinoma and breast carcinoma cells, it interacts with sialyl-lex-positive protein. As to quaternary structure, (Microbial infection) Interacts with Salmonella typhimurium sifA. Expressed in placenta, liver, prostate, thymus, spleen, ovary, colon, colon carcinoma and peripheral blood lymphocytes (PBL). Weakly expressed in brain, lung, kidney, and testis. No expression in heart, skeletal muscle, pancreas and small intestine. Predominantly expressed in the breast carcinoma cell line MCF-7.

The protein resides in the autolysosome membrane. It localises to the endosome membrane. Its subcellular location is the late endosome membrane. It is found in the lysosome membrane. Acts as a multivalent adapter protein that regulates Rab7-dependent and HOPS complex-dependent fusion events in the endolysosomal system and couples autophagic and the endocytic trafficking pathways. Acts as a dual effector of RAB7A and ARL8B that simultaneously binds these GTPases, bringing about clustering and fusion of late endosomes and lysosomes. Required for late stages of endolysosomal maturation, facilitating both endocytosis-mediated degradation of growth factor receptors and autophagosome clearance. Interaction with Arl8b is a crucial factor in the terminal maturation of autophagosomes and to mediate autophagosome-lysosome fusion. Positively regulates lysosome peripheral distribution and ruffled border formation in osteoclasts. May be involved in negative regulation of endocytic transport from early endosome to late endosome/lysosome implicating its association with Rab7. May have a role in sialyl-lex-mediated transduction of apoptotic signals. Involved in bone resorption. Its function is as follows. (Microbial infection) In case of infection contributes to Salmonella typhimurium pathogenesis by supporting the integrity of the Salmonella-containing vacuole (SCV) probably in concert with the HOPS complex and Rab7. This is Pleckstrin homology domain-containing family M member 1 from Homo sapiens (Human).